Here is a 454-residue protein sequence, read N- to C-terminus: tRNA-2-methylthio-N(6)-dimethylallyladenosine synthase (454 aa).

The 117-residue stretch at 6–122 folds into the MTTase N-terminal domain; the sequence is RRYHITTFGC…LKDLLESVFA (117 aa). Residues Cys-15, Cys-51, Cys-85, Cys-157, Cys-161, and Cys-164 each coordinate [4Fe-4S] cluster. The Radical SAM core domain maps to 143–380; the sequence is RDSTVTAWVN…NHLVNVKAAE (238 aa). Residues 383–447 form the TRAM domain; it reads QRYMGRIEEV…AFSLTGEPIE (65 aa).

The protein belongs to the methylthiotransferase family. MiaB subfamily. As to quaternary structure, monomer. The cofactor is [4Fe-4S] cluster.

It is found in the cytoplasm. The enzyme catalyses N(6)-dimethylallyladenosine(37) in tRNA + (sulfur carrier)-SH + AH2 + 2 S-adenosyl-L-methionine = 2-methylsulfanyl-N(6)-dimethylallyladenosine(37) in tRNA + (sulfur carrier)-H + 5'-deoxyadenosine + L-methionine + A + S-adenosyl-L-homocysteine + 2 H(+). In terms of biological role, catalyzes the methylthiolation of N6-(dimethylallyl)adenosine (i(6)A), leading to the formation of 2-methylthio-N6-(dimethylallyl)adenosine (ms(2)i(6)A) at position 37 in tRNAs that read codons beginning with uridine. This chain is tRNA-2-methylthio-N(6)-dimethylallyladenosine synthase, found in Nostoc sp. (strain PCC 7120 / SAG 25.82 / UTEX 2576).